Here is a 193-residue protein sequence, read N- to C-terminus: Interferon type A3 (193 aa).

The first 31 residues, 1–31, serve as a signal peptide directing secretion; that stretch reads MAVPASPQHPRGYGILLLTLLLKALATTASA. Cystine bridges form between cysteine 32–cysteine 129, cysteine 61–cysteine 155, and cysteine 68–cysteine 168. 4 N-linked (GlcNAc...) asparagine glycosylation sites follow: asparagine 65, asparagine 71, asparagine 108, and asparagine 186.

This sequence belongs to the alpha/beta interferon family.

The protein resides in the secreted. Its function is as follows. Has antiviral activities. The chain is Interferon type A3 (IFNA3) from Gallus gallus (Chicken).